The chain runs to 87 residues: Small ribosomal subunit protein uS17 (87 aa).

Belongs to the universal ribosomal protein uS17 family. In terms of assembly, part of the 30S ribosomal subunit.

One of the primary rRNA binding proteins, it binds specifically to the 5'-end of 16S ribosomal RNA. This Dichelobacter nodosus (strain VCS1703A) protein is Small ribosomal subunit protein uS17.